A 373-amino-acid chain; its full sequence is Chaperone protein DnaJ (373 aa).

The J domain maps to 5 to 70; it reads DYYEVLGVAK…QKRAAYDRYG (66 aa). The CR-type zinc finger occupies 133–211; it reads GFDTEIRVPS…CDGVGRTRRN (79 aa). 8 residues coordinate Zn(2+): C146, C149, C163, C166, C185, C188, C199, and C202. CXXCXGXG motif repeat units follow at residues 146–153, 163–170, 185–192, and 199–206; these read CDTCHGSG, CRTCGGSG, CPTCHGTG, and CPSCDGVG.

This sequence belongs to the DnaJ family. Homodimer. Zn(2+) is required as a cofactor.

Its subcellular location is the cytoplasm. In terms of biological role, participates actively in the response to hyperosmotic and heat shock by preventing the aggregation of stress-denatured proteins and by disaggregating proteins, also in an autonomous, DnaK-independent fashion. Unfolded proteins bind initially to DnaJ; upon interaction with the DnaJ-bound protein, DnaK hydrolyzes its bound ATP, resulting in the formation of a stable complex. GrpE releases ADP from DnaK; ATP binding to DnaK triggers the release of the substrate protein, thus completing the reaction cycle. Several rounds of ATP-dependent interactions between DnaJ, DnaK and GrpE are required for fully efficient folding. Also involved, together with DnaK and GrpE, in the DNA replication of plasmids through activation of initiation proteins. The sequence is that of Chaperone protein DnaJ from Bordetella bronchiseptica (strain ATCC BAA-588 / NCTC 13252 / RB50) (Alcaligenes bronchisepticus).